The primary structure comprises 151 residues: Probable cGMP 3',5'-cyclic phosphodiesterase subunit delta (151 aa).

Belongs to the PDE6D/unc-119 family. As to quaternary structure, interacts with Pde6.

It is found in the nucleus. The protein resides in the cytoplasm. The chain is Probable cGMP 3',5'-cyclic phosphodiesterase subunit delta from Drosophila erecta (Fruit fly).